The chain runs to 98 residues: NADH-ubiquinone oxidoreductase chain 4L (98 aa).

The next 3 membrane-spanning stretches (helical) occupy residues 1–21 (MSLTYMNMLMAFTTSLLGLLM), 29–49 (SLLCLEGMMLSLFVMVTITIL), and 61–81 (IILLVFAACEAALGLSLLVMV).

This sequence belongs to the complex I subunit 4L family. Core subunit of respiratory chain NADH dehydrogenase (Complex I) which is composed of 45 different subunits.

It localises to the mitochondrion inner membrane. It catalyses the reaction a ubiquinone + NADH + 5 H(+)(in) = a ubiquinol + NAD(+) + 4 H(+)(out). Core subunit of the mitochondrial membrane respiratory chain NADH dehydrogenase (Complex I) which catalyzes electron transfer from NADH through the respiratory chain, using ubiquinone as an electron acceptor. Part of the enzyme membrane arm which is embedded in the lipid bilayer and involved in proton translocation. The polypeptide is NADH-ubiquinone oxidoreductase chain 4L (MT-ND4L) (Ectophylla alba (White bat)).